The primary structure comprises 554 residues: Guanine nucleotide-binding protein alpha-2 subunit (554 aa).

Disordered regions lie at residues 1 to 139 (MGLC…NNSN) and 157 to 183 (VNGN…THSG). Gly2 is lipidated: N-myristoyl glycine. Cys4 is lipidated: S-palmitoyl cysteine. Basic and acidic residues-rich tracts occupy residues 7 to 17 (KDSRESTHDGG) and 28 to 43 (ANRR…DKKQ). The segment covering 52–66 (GSIVNAASNINNSSS) has biased composition (low complexity). Over residues 67-85 (GKTKISTVSEDGTVSNGVG) the composition is skewed to polar residues. Low complexity predominate over residues 91–139 (DNANNKNNGNNNNSNNNDNNNNNNNNIGNNINGNNNNDSENIHDSNNSN). The 327-residue stretch at 228 to 554 (NALKVLLLGS…ENSLKDSGVL (327 aa)) folds into the G-alpha domain. The interval 231–244 (KVLLLGSGESGKST) is G1 motif. Residues Glu239, Ser240, Gly241, Lys242, Ser243, Thr244, Asp351, Ile376, Thr382, Gly405, Asn471, Lys472, Asp474, and Ala526 each contribute to the GTP site. Ser243 contributes to the Mg(2+) binding site. The G2 motif stretch occupies residues 374–382 (DVIRTRKKT). Mg(2+) is bound at residue Thr382. The tract at residues 398–407 (LHFFDVGGQR) is G3 motif. The interval 467–474 (VLFLNKID) is G4 motif. Residues 524-529 (TQATDT) are G5 motif.

It belongs to the G-alpha family. G proteins are composed of 3 units; alpha, beta and gamma. The alpha chain contains the guanine nucleotide binding site. Mg(2+) is required as a cofactor.

Its function is as follows. Guanine nucleotide-binding proteins (G proteins) are involved as modulators or transducers in various transmembrane signaling systems. This protein may be involved in the determination of the cAMP level according to nutritional conditions, most probably as a regulator of adenylyl cyclase. This Kluyveromyces lactis (strain ATCC 8585 / CBS 2359 / DSM 70799 / NBRC 1267 / NRRL Y-1140 / WM37) (Yeast) protein is Guanine nucleotide-binding protein alpha-2 subunit (GPA2).